The primary structure comprises 156 residues: Small ribosomal subunit protein uS7 (156 aa).

Belongs to the universal ribosomal protein uS7 family. Part of the 30S ribosomal subunit. Contacts proteins S9 and S11.

In terms of biological role, one of the primary rRNA binding proteins, it binds directly to 16S rRNA where it nucleates assembly of the head domain of the 30S subunit. Is located at the subunit interface close to the decoding center, probably blocks exit of the E-site tRNA. This is Small ribosomal subunit protein uS7 from Tropheryma whipplei (strain TW08/27) (Whipple's bacillus).